Reading from the N-terminus, the 457-residue chain is Phosphomethylpyrimidine synthase (457 aa).

Substrate contacts are provided by residues Asn81, Met110, Tyr139, His175, 195 to 197 (SRG), 236 to 239 (DALR), and Glu275. His279 serves as a coordination point for Zn(2+). A substrate-binding site is contributed by Tyr302. Position 343 (His343) interacts with Zn(2+). [4Fe-4S] cluster-binding residues include Cys423, Cys426, and Cys431.

Belongs to the ThiC family. [4Fe-4S] cluster serves as cofactor.

It carries out the reaction 5-amino-1-(5-phospho-beta-D-ribosyl)imidazole + S-adenosyl-L-methionine = 4-amino-2-methyl-5-(phosphooxymethyl)pyrimidine + CO + 5'-deoxyadenosine + formate + L-methionine + 3 H(+). The protein operates within cofactor biosynthesis; thiamine diphosphate biosynthesis. Its function is as follows. Catalyzes the synthesis of the hydroxymethylpyrimidine phosphate (HMP-P) moiety of thiamine from aminoimidazole ribotide (AIR) in a radical S-adenosyl-L-methionine (SAM)-dependent reaction. The sequence is that of Phosphomethylpyrimidine synthase from Aquifex aeolicus (strain VF5).